Consider the following 227-residue polypeptide: UPF0758 protein PG_0894 (227 aa).

Residues 104 to 227 (SITDSRMAYR…YFSFADEGLL (124 aa)) enclose the MPN domain. Zn(2+) is bound by residues H175, H177, and D188. The JAMM motif signature appears at 175-188 (HNHPSGTVRPSEQD).

This sequence belongs to the UPF0758 family.

This chain is UPF0758 protein PG_0894, found in Porphyromonas gingivalis (strain ATCC BAA-308 / W83).